Reading from the N-terminus, the 731-residue chain is MPPKDGKSAKKKGGISKAEKERLQREEEEKRQREAEEARLIAEREENERLERERIEQEKQHILELKDRERREDELNELRHILDENHFAVTVWEAECREKSKWERYMLCDGSPDPSVQPEINTYISLWRDDSENQIQKVLEECALTLELEKELEFLLGDGPEPSIAEQYQETLLSLQNLIHYKLNQATEELLKFANYNSDIDTGNMQTVVKDSNITLCLWANLNKNPRFKGYKFEEVGLGFELPKPLAVIEVAVRILHTRYDHLSHHSEREQLQKRRSMMEAILTQNTESSAAVHNGKMEGERDESESSKQVDECHSVRSESRKRSAVSVISAKEGRKSSSIKLLEEGESQMEEITTTLEADQHDPYPSPAEPVTDTDVHIVDLQQFTPLGGVFYFDLFHMPPQSRTVKGWEMRELLDTGLQVFPYPTEQSRIQSSTSVKLDEHSNTTVASLPVGVTVALPHSVLFLEDPQVARWDPIGQHWRTDCISETSYDAELRTISFQMTAFYAFTLLQETYANMPFQSWELRPLGQDSALFTITGALIEVSITVKGKQCMLHTEETKDLDRLLGKWMSPSELQKAMRKAGINIFVNEYSDKYVSINLKDPLIEHAVYEQMALMSSAVAFSWSRWNAQCRQEHLVLQACEQLEVGPVAEKAWSLYLLGAQRNQHLKMKEQEDSFSPELAEGSEFHSTFLHMLRQDLSTEGQARVRQSHHLYIDTVQRLLCATRVLTYS.

2 disordered regions span residues 1–50 (MPPK…NERL) and 285–320 (QNTESSAAVHNGKMEGERDESESSKQVDECHSVRSE). 2 stretches are compositionally biased toward basic and acidic residues: residues 17-50 (KAEKERLQREEEEKRQREAEEARLIAEREENERL) and 296-320 (GKMEGERDESESSKQVDECHSVRSE).

This sequence belongs to the DNAI7 family. As to quaternary structure, part of the multisubunit axonemal dynein complex formed at least of two heavy chains and a number of intermediate and light chains.

It is found in the cell projection. It localises to the cilium. Its subcellular location is the cytoplasm. Its function is as follows. Via its association with the multisubunit axonemal dynein complex, may be potentially involved in the regulation of cilia function. In Danio rerio (Zebrafish), this protein is Dynein axonemal intermediate chain 7 (dnai7).